Consider the following 433-residue polypeptide: Elongation factor 1-alpha (433 aa).

The tr-type G domain occupies 5-220 (KPHINVVFIG…ALDMLKPPQL (216 aa)). A G1 region spans residues 14–21 (GHVDHGKS). 14–21 (GHVDHGKS) provides a ligand contact to GTP. Residue serine 21 coordinates Mg(2+). The G2 stretch occupies residues 70 to 74 (GVTID). Residues 91-94 (DAPG) are G3. Residues 91–95 (DAPGH) and 146–149 (NKMD) contribute to the GTP site. The segment at 146–149 (NKMD) is G4. The G5 stretch occupies residues 186-188 (ASF).

It belongs to the TRAFAC class translation factor GTPase superfamily. Classic translation factor GTPase family. EF-Tu/EF-1A subfamily.

The protein resides in the cytoplasm. The catalysed reaction is GTP + H2O = GDP + phosphate + H(+). In terms of biological role, GTP hydrolase that promotes the GTP-dependent binding of aminoacyl-tRNA to the A-site of ribosomes during protein biosynthesis. The sequence is that of Elongation factor 1-alpha from Nanoarchaeum equitans (strain Kin4-M).